Here is a 522-residue protein sequence, read N- to C-terminus: Protein nucleotidyltransferase YdiU (522 aa).

Positions 109, 111, 112, 132, 144, 145, 195, and 202 each coordinate ATP. Aspartate 271 serves as the catalytic Proton acceptor. Asparagine 272 and aspartate 281 together coordinate Mg(2+). Aspartate 281 serves as a coordination point for ATP.

This sequence belongs to the SELO family. It depends on Mg(2+) as a cofactor. Mn(2+) is required as a cofactor.

It catalyses the reaction L-seryl-[protein] + ATP = 3-O-(5'-adenylyl)-L-seryl-[protein] + diphosphate. The enzyme catalyses L-threonyl-[protein] + ATP = 3-O-(5'-adenylyl)-L-threonyl-[protein] + diphosphate. It carries out the reaction L-tyrosyl-[protein] + ATP = O-(5'-adenylyl)-L-tyrosyl-[protein] + diphosphate. The catalysed reaction is L-histidyl-[protein] + UTP = N(tele)-(5'-uridylyl)-L-histidyl-[protein] + diphosphate. It catalyses the reaction L-seryl-[protein] + UTP = O-(5'-uridylyl)-L-seryl-[protein] + diphosphate. The enzyme catalyses L-tyrosyl-[protein] + UTP = O-(5'-uridylyl)-L-tyrosyl-[protein] + diphosphate. Its function is as follows. Nucleotidyltransferase involved in the post-translational modification of proteins. It can catalyze the addition of adenosine monophosphate (AMP) or uridine monophosphate (UMP) to a protein, resulting in modifications known as AMPylation and UMPylation. The polypeptide is Protein nucleotidyltransferase YdiU (Burkholderia cenocepacia (strain HI2424)).